Reading from the N-terminus, the 986-residue chain is Translation initiation factor IF-2 (986 aa).

A disordered region spans residues 47 to 388 (SAPAQTPHKE…RSKGRKGKYE (342 aa)). Residues 53 to 64 (PHKEVSQEEVRV) show a composition bias toward basic and acidic residues. A compositionally biased stretch (low complexity) spans 78 to 94 (PEAASAEAASAPAAQEE). The span at 95–113 (APQKAEPEKVEAEKAEAPK) shows a compositional bias: basic and acidic residues. 2 stretches are compositionally biased toward low complexity: residues 127 to 141 (EAAP…PAEA) and 153 to 214 (APVA…QAPA). 2 stretches are compositionally biased toward basic and acidic residues: residues 215 to 225 (KAEEQEPEKAT) and 268 to 278 (GVERPGTERPA). The segment covering 286–300 (PAGAPGRPGERPTTG) has biased composition (low complexity). Basic and acidic residues predominate over residues 358–374 (GKKDSFKDILDKRERVF). Residues 486-653 (KRPPVVTIMG…MVLLQADVLE (168 aa)) form the tr-type G domain. A G1 region spans residues 495-502 (GHVDHGKT). GTP is bound at residue 495–502 (GHVDHGKT). Residues 520–524 (GITQH) are G2. The tract at residues 541-544 (DTPG) is G3. GTP-binding positions include 541–545 (DTPGH) and 595–598 (NKID). Residues 595-598 (NKID) are G4. A G5 region spans residues 631–633 (SAK).

This sequence belongs to the TRAFAC class translation factor GTPase superfamily. Classic translation factor GTPase family. IF-2 subfamily.

It localises to the cytoplasm. Its function is as follows. One of the essential components for the initiation of protein synthesis. Protects formylmethionyl-tRNA from spontaneous hydrolysis and promotes its binding to the 30S ribosomal subunits. Also involved in the hydrolysis of GTP during the formation of the 70S ribosomal complex. The chain is Translation initiation factor IF-2 from Citrifermentans bemidjiense (strain ATCC BAA-1014 / DSM 16622 / JCM 12645 / Bem) (Geobacter bemidjiensis).